The chain runs to 278 residues: Protein U52 (278 aa).

Residues 1–18 (MTRVSSVSASCTTTNPPK) show a composition bias toward polar residues. The disordered stretch occupies residues 1–25 (MTRVSSVSASCTTTNPPKNTREDMS).

The protein belongs to the herpesviridae UL79 family.

In Elephas maximus (Indian elephant), this protein is Protein U52.